Reading from the N-terminus, the 329-residue chain is Type 2 lactosamine alpha-2,3-sialyltransferase (329 aa).

Over 1–4 (MKGY) the chain is Cytoplasmic. A helical; Signal-anchor for type II membrane protein transmembrane segment spans residues 5 to 25 (LVAIFLSSIFLYYVLYCILWG). At 26-329 (TNGYWFPAEE…IKKKMVINLT (304 aa)) the chain is on the lumenal side. Asparagine 129, asparagine 181, asparagine 295, and asparagine 308 each carry an N-linked (GlcNAc...) asparagine glycan.

The protein belongs to the glycosyltransferase 29 family.

The protein localises to the golgi apparatus membrane. It catalyses the reaction a neolactoside nLc4Cer(d18:1(4E)) + CMP-N-acetyl-beta-neuraminate = a neolactoside IV(3)-alpha-NeuAc-nLc4Cer(d18:1(4E)) + CMP + H(+). The enzyme catalyses a beta-D-galactosyl-(1-&gt;4)-N-acetyl-beta-D-glucosaminyl derivative + CMP-N-acetyl-beta-neuraminate = an N-acetyl-alpha-neuraminyl-(2-&gt;3)-beta-D-galactosyl-(1-&gt;4)-N-acetyl-beta-D-glucosaminyl derivative + CMP + H(+). It carries out the reaction a neolactoside nLc6Cer(d18:1(4E)) + CMP-N-acetyl-beta-neuraminate = a neolactoside VI(3)-alpha-NeuNAc-nLc6Cer(d18:1(4E)) + CMP + H(+). Transfers the sialyl residue from CMP-N-acetyl-beta-neuraminate to the terminal galactose residue on sugar chains of glycoproteins and glycolipids. It's alpha-2,3-sialyltransferase activity is specific toward type II glycan chains (Galbeta1-4GlcNAc) on glycoproteins and glycolipids such as neolactosides nLc4Cer and nLc6Cer, whose sialyl-products serve as precursors for the Lewis X antigen. Critically involved in the synthesis of functional selectin ligands needed for neutrophil recruitment during inflammation and lymphocyte homing to the lymph nodes. This is Type 2 lactosamine alpha-2,3-sialyltransferase (St3gal6) from Mus musculus (Mouse).